Here is a 288-residue protein sequence, read N- to C-terminus: UDP-3-O-acyl-N-acetylglucosamine deacetylase (288 aa).

The Zn(2+) site is built by His-79, His-236, and Asp-240. The active-site Proton donor is the His-263.

The protein belongs to the LpxC family. Zn(2+) is required as a cofactor.

The catalysed reaction is a UDP-3-O-[(3R)-3-hydroxyacyl]-N-acetyl-alpha-D-glucosamine + H2O = a UDP-3-O-[(3R)-3-hydroxyacyl]-alpha-D-glucosamine + acetate. It participates in glycolipid biosynthesis; lipid IV(A) biosynthesis; lipid IV(A) from (3R)-3-hydroxytetradecanoyl-[acyl-carrier-protein] and UDP-N-acetyl-alpha-D-glucosamine: step 2/6. In terms of biological role, catalyzes the hydrolysis of UDP-3-O-myristoyl-N-acetylglucosamine to form UDP-3-O-myristoylglucosamine and acetate, the committed step in lipid A biosynthesis. In Rickettsia prowazekii (strain Madrid E), this protein is UDP-3-O-acyl-N-acetylglucosamine deacetylase.